We begin with the raw amino-acid sequence, 297 residues long: N-acetylneuraminate lyase (297 aa).

Aceneuramate-binding residues include serine 47 and threonine 48. Tyrosine 137 acts as the Proton donor in catalysis. Residue lysine 165 is the Schiff-base intermediate with substrate of the active site. Threonine 167, glycine 189, aspartate 191, glutamate 192, and serine 208 together coordinate aceneuramate.

The protein belongs to the DapA family. NanA subfamily. In terms of assembly, homotetramer.

The protein localises to the cytoplasm. It catalyses the reaction aceneuramate = aldehydo-N-acetyl-D-mannosamine + pyruvate. It participates in amino-sugar metabolism; N-acetylneuraminate degradation; D-fructose 6-phosphate from N-acetylneuraminate: step 1/5. Its function is as follows. Catalyzes the reversible aldol cleavage of N-acetylneuraminic acid (sialic acid; Neu5Ac) to form pyruvate and N-acetylmannosamine (ManNAc) via a Schiff base intermediate. The sequence is that of N-acetylneuraminate lyase from Escherichia fergusonii (strain ATCC 35469 / DSM 13698 / CCUG 18766 / IAM 14443 / JCM 21226 / LMG 7866 / NBRC 102419 / NCTC 12128 / CDC 0568-73).